Here is a 190-residue protein sequence, read N- to C-terminus: Putative manganese efflux pump MntP (190 aa).

The next 6 membrane-spanning stretches (helical) occupy residues Pro3–Gly23, Ile39–Gln59, Val65–Ile85, Trp106–Phe128, Ile133–Gly155, and Ala157–Val177.

The protein belongs to the MntP (TC 9.B.29) family.

The protein resides in the cell inner membrane. In terms of biological role, probably functions as a manganese efflux pump. The sequence is that of Putative manganese efflux pump MntP from Pseudomonas fluorescens (strain ATCC BAA-477 / NRRL B-23932 / Pf-5).